The chain runs to 467 residues: Light-independent protochlorophyllide reductase subunit N (467 aa).

[4Fe-4S] cluster-binding residues include C22, C47, and C107.

It belongs to the BchN/ChlN family. Protochlorophyllide reductase is composed of three subunits; ChlL, ChlN and ChlB. Forms a heterotetramer of two ChlB and two ChlN subunits. Requires [4Fe-4S] cluster as cofactor.

It is found in the plastid. It localises to the chloroplast. It carries out the reaction chlorophyllide a + oxidized 2[4Fe-4S]-[ferredoxin] + 2 ADP + 2 phosphate = protochlorophyllide a + reduced 2[4Fe-4S]-[ferredoxin] + 2 ATP + 2 H2O. It participates in porphyrin-containing compound metabolism; chlorophyll biosynthesis (light-independent). Functionally, component of the dark-operative protochlorophyllide reductase (DPOR) that uses Mg-ATP and reduced ferredoxin to reduce ring D of protochlorophyllide (Pchlide) to form chlorophyllide a (Chlide). This reaction is light-independent. The NB-protein (ChlN-ChlB) is the catalytic component of the complex. This chain is Light-independent protochlorophyllide reductase subunit N, found in Chara vulgaris (Common stonewort).